A 90-amino-acid polypeptide reads, in one-letter code: PIK3R3 upstream open reading frame protein (90 aa).

The segment at 1-63 is disordered; the sequence is MGPSQLVRAP…PASEATNISD (63 aa). A compositionally biased stretch (basic residues) spans 27–46; sequence PRRRCPSMFKCSRRTYRQKP. Over residues 50–63 the composition is skewed to polar residues; sequence TATNPASEATNISD.

This is PIK3R3 upstream open reading frame protein from Mus musculus (Mouse).